The sequence spans 295 residues: Protein FAM221A (295 aa).

The segment covering 272 to 283 (QERLLKEKEQKR) has biased composition (basic and acidic residues). A disordered region spans residues 272–295 (QERLLKEKEQKRQKNSKPPTTNRP).

It belongs to the FAM221 family.

The protein is Protein FAM221A (fam221a) of Xenopus tropicalis (Western clawed frog).